Consider the following 213-residue polypeptide: U1 small nuclear ribonucleoprotein C (213 aa).

The segment at 4-36 (YYCDYCDTYLTHDSPSVRKQHNAGYKHKANVRS) adopts a Matrin-type zinc-finger fold. The span at 143-166 (APSMPMPPLNSLPRPPTMNVPPAV) shows a compositional bias: pro residues. Residues 143–213 (APSMPMPPLN…INAQGPEANH (71 aa)) are disordered. Residues 167 to 180 (PGSTSTPTSGGAPS) are compositionally biased toward low complexity.

It belongs to the U1 small nuclear ribonucleoprotein C family. In terms of assembly, U1 snRNP is composed of the 7 core Sm proteins B/B', D1, D2, D3, E, F and G that assemble in a heptameric protein ring on the Sm site of the small nuclear RNA to form the core snRNP, and at least 3 U1 snRNP-specific proteins U1-70K, U1-A and U1-C. U1-C interacts with U1 snRNA and the 5' splice-site region of the pre-mRNA.

The protein resides in the nucleus. In terms of biological role, component of the spliceosomal U1 snRNP, which is essential for recognition of the pre-mRNA 5' splice-site and the subsequent assembly of the spliceosome. U1-C is directly involved in initial 5' splice-site recognition for both constitutive and regulated alternative splicing. The interaction with the 5' splice-site seems to precede base-pairing between the pre-mRNA and the U1 snRNA. Stimulates commitment or early (E) complex formation by stabilizing the base pairing of the 5' end of the U1 snRNA and the 5' splice-site region. This is U1 small nuclear ribonucleoprotein C from Vitis vinifera (Grape).